The following is a 123-amino-acid chain: Large ribosomal subunit protein bL12 (123 aa).

This sequence belongs to the bacterial ribosomal protein bL12 family. As to quaternary structure, homodimer. Part of the ribosomal stalk of the 50S ribosomal subunit. Forms a multimeric L10(L12)X complex, where L10 forms an elongated spine to which 2 to 4 L12 dimers bind in a sequential fashion. Binds GTP-bound translation factors.

Forms part of the ribosomal stalk which helps the ribosome interact with GTP-bound translation factors. Is thus essential for accurate translation. The polypeptide is Large ribosomal subunit protein bL12 (Rhodospirillum rubrum (strain ATCC 11170 / ATH 1.1.1 / DSM 467 / LMG 4362 / NCIMB 8255 / S1)).